The primary structure comprises 303 residues: Sulfate adenylyltransferase subunit 2 (303 aa).

Belongs to the PAPS reductase family. CysD subfamily. In terms of assembly, heterodimer composed of CysD, the smaller subunit, and CysN.

The enzyme catalyses sulfate + ATP + H(+) = adenosine 5'-phosphosulfate + diphosphate. It participates in sulfur metabolism; hydrogen sulfide biosynthesis; sulfite from sulfate: step 1/3. With CysN forms the ATP sulfurylase (ATPS) that catalyzes the adenylation of sulfate producing adenosine 5'-phosphosulfate (APS) and diphosphate, the first enzymatic step in sulfur assimilation pathway. APS synthesis involves the formation of a high-energy phosphoric-sulfuric acid anhydride bond driven by GTP hydrolysis by CysN coupled to ATP hydrolysis by CysD. This chain is Sulfate adenylyltransferase subunit 2, found in Aliarcobacter butzleri (strain RM4018) (Arcobacter butzleri).